Consider the following 370-residue polypeptide: Uroporphyrinogen decarboxylase (370 aa).

Substrate-binding positions include 29–33, aspartate 79, tyrosine 155, serine 210, and histidine 342; that span reads RQAGR.

Belongs to the uroporphyrinogen decarboxylase family. Homodimer.

The protein localises to the cytoplasm. The enzyme catalyses uroporphyrinogen III + 4 H(+) = coproporphyrinogen III + 4 CO2. It functions in the pathway porphyrin-containing compound metabolism; protoporphyrin-IX biosynthesis; coproporphyrinogen-III from 5-aminolevulinate: step 4/4. Catalyzes the decarboxylation of four acetate groups of uroporphyrinogen-III to yield coproporphyrinogen-III. The polypeptide is Uroporphyrinogen decarboxylase (Acidovorax ebreus (strain TPSY) (Diaphorobacter sp. (strain TPSY))).